Here is a 497-residue protein sequence, read N- to C-terminus: Uridine 5'-monophosphate synthase (497 aa).

Residues 8 to 226 are OPRTase; it reads TRNGALKRNL…KLEINSELEN (219 aa). The interval 227–232 is domain linker; the sequence is LSSLPY. The segment at 233 to 496 is OMPdecase; that stretch reads VENVRTPLAE…WDALTRSDDS (264 aa). UMP contacts are provided by residues aspartate 271 and 293–295; that span reads KLH. Lysine 293 contributes to the orotidine 5'-phosphate binding site. Residues aspartate 324, lysine 326, and aspartate 329 each act as for OMPdecase activity in the active site. Orotidine 5'-phosphate-binding positions include lysine 326, aspartate 329, threonine 333, serine 387, 446–448, and 466–467; these read QQW and GR. Residues aspartate 329, threonine 333, serine 387, 446–448, and 466–467 contribute to the UMP site; these read QQW and GR.

It in the N-terminal section; belongs to the purine/pyrimidine phosphoribosyltransferase family. The protein in the C-terminal section; belongs to the OMP decarboxylase family. Expressed in intestine and in neurons near the nerve ring and rectum.

Its subcellular location is the cytoplasm. It catalyses the reaction orotidine 5'-phosphate + diphosphate = orotate + 5-phospho-alpha-D-ribose 1-diphosphate. The enzyme catalyses orotidine 5'-phosphate + H(+) = UMP + CO2. It functions in the pathway pyrimidine metabolism; UMP biosynthesis via de novo pathway; UMP from orotate: step 1/2. Its pathway is pyrimidine metabolism; UMP biosynthesis via de novo pathway; UMP from orotate: step 2/2. Bifunctional enzyme which catalyzes the formation of UMP from orotate in the de novo pathway of pyrimidine biosynthesis. May also form UMP from uracil. Regulates the size of gut granules during embryonic development. Involved in resistance to DNA damaging agents including UV-C and X-ray radiation. In Caenorhabditis elegans, this protein is Uridine 5'-monophosphate synthase.